The following is a 764-amino-acid chain: Nucleolar transcription factor 1 (764 aa).

An N-acetylmethionine modification is found at Met-1. Residues 1 to 21 (MNGEADCPTDLEMAAPKGQDR) form a disordered region. 2 DNA-binding regions (HMG box) span residues 112–180 (PKKP…ARFR) and 196–264 (PEKP…RDYI). Thr-201 is modified (phosphothreonine). A phosphoserine mark is found at Ser-273, Ser-336, Ser-364, Ser-389, Ser-412, Ser-433, Ser-435, Ser-484, Ser-495, Ser-546, Ser-584, and Ser-638. The segment at residues 298-362 (TKPPPNSYSL…DYEVELLRFL (65 aa)) is a DNA-binding region (HMG box 3). The segment at 381 to 411 (NINKKQATSPASKKPAQEGGKGGSEKPKRPV) is disordered. 3 consecutive DNA-binding regions (HMG box) follow at residues 407-475 (PKRP…GGER), 482-549 (PESP…SEMR), and 568-634 (KKPP…DLWV). The tract at residues 459–487 (REAALKAQSERKPGGEREERGKLPESPKR) is disordered. A disordered region spans residues 546–576 (SEMRAPPAATNSSKKMKFQGEPKKPPMNGYQ). Positions 648-764 (YISNKRKSMT…SGDSSDSDSN (117 aa)) are disordered. A compositionally biased stretch (polar residues) spans 664 to 674 (PKSSRTTLQSK). The span at 677-745 (SEEDDEEDED…DDDEDEDNES (69 aa)) shows a compositional bias: acidic residues. Over residues 746 to 758 (EGSSSSSSSSGDS) the composition is skewed to low complexity.

In terms of assembly, homodimer. Part of Pol I pre-initiation complex (PIC), in which Pol I core assembles with RRN3 and promoter-bound UTBF and SL1/TIF-IB complex. Interacts with TOP2A in the context of Pol I complex. Interacts with TBP. Interacts with TAF1A. Interacts with RASL11A. Binds to IRS1 and PIK3CA. Interacts with DHX33. Interacts with PHF6. Interacts with CEBPA (isoform 1 and isoform 4). Interacts with DDX11. Interacts with NOP53. Interacts with ALKBH2. Post-translationally, phosphorylated and activated by PIK3CA.

Its subcellular location is the nucleus. The protein resides in the nucleolus. Functionally, recognizes the ribosomal RNA gene promoter and activates transcription mediated by RNA polymerase I (Pol I) through cooperative interactions with the transcription factor SL1/TIF-IB complex. It binds specifically to the upstream control element and can activate Pol I promoter escape. This Homo sapiens (Human) protein is Nucleolar transcription factor 1 (UBTF).